Consider the following 124-residue polypeptide: MATINQLVRKSRSSKVVKSNVPALEACPQKRGVCTRVYTTTPKKPNSALRKVCRVRLTNGFEVSSYIGGEGHNLQEHSVILIRGGRVKDLPGVRYHTVRGALDCSGVKDRKQGRSKYGVKKPKA.

The residue at position 89 (Asp89) is a 3-methylthioaspartic acid.

Belongs to the universal ribosomal protein uS12 family. As to quaternary structure, part of the 30S ribosomal subunit. Contacts proteins S8 and S17. May interact with IF1 in the 30S initiation complex.

In terms of biological role, with S4 and S5 plays an important role in translational accuracy. Its function is as follows. Interacts with and stabilizes bases of the 16S rRNA that are involved in tRNA selection in the A site and with the mRNA backbone. Located at the interface of the 30S and 50S subunits, it traverses the body of the 30S subunit contacting proteins on the other side and probably holding the rRNA structure together. The combined cluster of proteins S8, S12 and S17 appears to hold together the shoulder and platform of the 30S subunit. This Proteus mirabilis (strain HI4320) protein is Small ribosomal subunit protein uS12.